The following is a 401-amino-acid chain: Argininosuccinate synthase (401 aa).

8–16 (AYSGGLDTS) provides a ligand contact to ATP. Residue Tyr86 coordinates L-citrulline. Gly116 provides a ligand contact to ATP. L-aspartate-binding residues include Thr118, Asn122, and Asp123. Asn122 serves as a coordination point for L-citrulline. Arg126, Ser174, Glu258, and Tyr270 together coordinate L-citrulline.

It belongs to the argininosuccinate synthase family. Type 1 subfamily. As to quaternary structure, homotetramer.

The protein localises to the cytoplasm. It carries out the reaction L-citrulline + L-aspartate + ATP = 2-(N(omega)-L-arginino)succinate + AMP + diphosphate + H(+). It participates in amino-acid biosynthesis; L-arginine biosynthesis; L-arginine from L-ornithine and carbamoyl phosphate: step 2/3. In Acidothermus cellulolyticus (strain ATCC 43068 / DSM 8971 / 11B), this protein is Argininosuccinate synthase.